Here is a 40-residue protein sequence, read N- to C-terminus: Mastoparan-like peptide 12c (40 aa).

An N-terminal signal peptide occupies residues 1–7; sequence MSAEALA. The segment at 1-22 is disordered; the sequence is MSAEALADPKADPLAGPNPDAD. AXPX repeat units lie at residues 7-10, 11-14, 15-18, and 19-22; these read ADPK, ADPL, AGPN, and PDAD. Residues 8 to 25 constitute a propeptide that is removed on maturation; that stretch reads DPKADPLAGPNPDADPEA. Residue L39 is modified to Leucine amide.

This sequence belongs to the MCD family. Mastoparan subfamily. In terms of tissue distribution, expressed by the venom gland.

It localises to the secreted. Its function is as follows. Shows mast cell degranulation and antimicrobial activities against the Gram-negative bacteria E.coli ATCC 25922 (MIC=6.0 ug/ml), the Gram-positive bacteria S.aureus ATCC 2592 (MIC=3.0 ug/ml) and the fungus C.albicans ATCC 2002 (MIC=12 ug/ml). Exhibits little hemolytic activity against washed human erythrocytes. Its mast cell degranulation activity may be related to the activation of G-protein coupled receptors in mast cells as well as interaction with other proteins located in cell endosomal membranes in the mast cells. In Vespa magnifica (Hornet), this protein is Mastoparan-like peptide 12c.